A 231-amino-acid chain; its full sequence is Flagellar L-ring protein (231 aa).

The signal sequence occupies residues 1 to 20 (MTYRRIPLYLSCLFLLALSG). A lipid anchor (N-palmitoyl cysteine) is attached at C21. C21 carries the S-diacylglycerol cysteine lipid modification.

Belongs to the FlgH family. The basal body constitutes a major portion of the flagellar organelle and consists of four rings (L,P,S, and M) mounted on a central rod.

It localises to the cell outer membrane. It is found in the bacterial flagellum basal body. Functionally, assembles around the rod to form the L-ring and probably protects the motor/basal body from shearing forces during rotation. This is Flagellar L-ring protein from Desulfotalea psychrophila (strain LSv54 / DSM 12343).